A 99-amino-acid polypeptide reads, in one-letter code: Large ribosomal subunit protein bL28 (99 aa).

The protein belongs to the bacterial ribosomal protein bL28 family.

The sequence is that of Large ribosomal subunit protein bL28 from Brucella anthropi (strain ATCC 49188 / DSM 6882 / CCUG 24695 / JCM 21032 / LMG 3331 / NBRC 15819 / NCTC 12168 / Alc 37) (Ochrobactrum anthropi).